We begin with the raw amino-acid sequence, 432 residues long: Proline--tRNA ligase (432 aa).

This sequence belongs to the class-II aminoacyl-tRNA synthetase family. ProS type 2 subfamily. Homodimer.

The protein resides in the cytoplasm. It carries out the reaction tRNA(Pro) + L-proline + ATP = L-prolyl-tRNA(Pro) + AMP + diphosphate. In terms of biological role, catalyzes the attachment of proline to tRNA(Pro) in a two-step reaction: proline is first activated by ATP to form Pro-AMP and then transferred to the acceptor end of tRNA(Pro). This Rickettsia prowazekii (strain Madrid E) protein is Proline--tRNA ligase.